The sequence spans 279 residues: Large ribosomal subunit protein uL2 (279 aa).

Disordered stretches follow at residues 1 to 43 and 207 to 279; these read MGIK…TAGR and KAGR…PGKH. Positions 8 to 22 are enriched in polar residues; that stretch reads PTTNGRRNMTASDFS. Residues 23 to 33 show a composition bias toward basic and acidic residues; it reads EITKTKPEKSL. Polar residues predominate over residues 34–43; that stretch reads LDSQSHTAGR. 2 stretches are compositionally biased toward basic residues: residues 209 to 219 and 254 to 279; these read GRTRWQGKRPT and TLGK…PGKH.

Belongs to the universal ribosomal protein uL2 family. Part of the 50S ribosomal subunit. Forms a bridge to the 30S subunit in the 70S ribosome.

Its function is as follows. One of the primary rRNA binding proteins. Required for association of the 30S and 50S subunits to form the 70S ribosome, for tRNA binding and peptide bond formation. It has been suggested to have peptidyltransferase activity; this is somewhat controversial. Makes several contacts with the 16S rRNA in the 70S ribosome. The chain is Large ribosomal subunit protein uL2 from Lactiplantibacillus plantarum (strain ATCC BAA-793 / NCIMB 8826 / WCFS1) (Lactobacillus plantarum).